The following is a 632-amino-acid chain: Phosphomethylpyrimidine synthase (632 aa).

Over residues 1–13 (MNIRSNPDTTLPA) the composition is skewed to polar residues. Positions 1-26 (MNIRSNPDTTLPAVTTGPLPSSRKIF) are disordered. Substrate is bound by residues N221, M250, Y279, H315, 335–337 (SRG), 376–379 (DGLR), and E415. H419 contacts Zn(2+). Y442 contacts substrate. H483 serves as a coordination point for Zn(2+). Residues C563, C566, and C571 each contribute to the [4Fe-4S] cluster site.

This sequence belongs to the ThiC family. As to quaternary structure, homodimer. It depends on [4Fe-4S] cluster as a cofactor.

The enzyme catalyses 5-amino-1-(5-phospho-beta-D-ribosyl)imidazole + S-adenosyl-L-methionine = 4-amino-2-methyl-5-(phosphooxymethyl)pyrimidine + CO + 5'-deoxyadenosine + formate + L-methionine + 3 H(+). Its pathway is cofactor biosynthesis; thiamine diphosphate biosynthesis. Catalyzes the synthesis of the hydroxymethylpyrimidine phosphate (HMP-P) moiety of thiamine from aminoimidazole ribotide (AIR) in a radical S-adenosyl-L-methionine (SAM)-dependent reaction. The protein is Phosphomethylpyrimidine synthase of Afipia carboxidovorans (strain ATCC 49405 / DSM 1227 / KCTC 32145 / OM5) (Oligotropha carboxidovorans).